The chain runs to 608 residues: 1-phosphatidylinositol 4,5-bisphosphate phosphodiesterase zeta-1 (608 aa).

Positions 35-70 (CSYIHVKQIFKDNDRLKQGRITIEEFRAIYRIITHR) constitute an EF-hand domain. A PI-PLC X-box domain is found at 155 to 299 (QDMTHPLNDY…LKFKILVKNK (145 aa)). Active-site residues include histidine 170 and histidine 215. The disordered stretch occupies residues 305–324 (KETHERKGSDKRGDNQDKET). The region spanning 349–465 (LSDLVIYTKA…GYILKPHFLR (117 aa)) is the PI-PLC Y-box domain. Positions 465–589 (RESKSYFNPS…KGYRRIPLFS (125 aa)) constitute a C2 domain.

Interacts via its C2 domain with PtdIns(3)P and, to a lesser extent, PtdIns(5)P in vitro. Ca(2+) serves as cofactor. In terms of tissue distribution, expressed specifically in testis and sperm. Weakly expressed in pancreatic-duct cells. Up-regulated in pancreatic-duct cells from patients with cystic fibrosis.

It is found in the nucleus. The protein localises to the cytoplasm. Its subcellular location is the perinuclear region. The enzyme catalyses a 1,2-diacyl-sn-glycero-3-phospho-(1D-myo-inositol-4,5-bisphosphate) + H2O = 1D-myo-inositol 1,4,5-trisphosphate + a 1,2-diacyl-sn-glycerol + H(+). Functionally, the production of the second messenger molecules diacylglycerol (DAG) and inositol 1,4,5-trisphosphate (IP3) is mediated by activated phosphatidylinositol-specific phospholipase C enzymes. In vitro, hydrolyzes PtdIns(4,5)P2 in a Ca(2+)-dependent manner. Triggers intracellular Ca(2+) oscillations in oocytes solely during M phase and is involved in inducing oocyte activation and initiating embryonic development up to the blastocyst stage. Is therefore a strong candidate for the egg-activating soluble sperm factor that is transferred from the sperm into the egg cytoplasm following gamete membrane fusion. May exert an inhibitory effect on phospholipase-C-coupled processes that depend on calcium ions and protein kinase C, including CFTR trafficking and function. The polypeptide is 1-phosphatidylinositol 4,5-bisphosphate phosphodiesterase zeta-1 (Homo sapiens (Human)).